Consider the following 319-residue polypeptide: Acetyl-coenzyme A carboxylase carboxyl transferase subunit alpha (319 aa).

The CoA carboxyltransferase C-terminal domain occupies 35–296; it reads NIDEEVHRLR…KAQLLEDLAD (262 aa).

The protein belongs to the AccA family. Acetyl-CoA carboxylase is a heterohexamer composed of biotin carboxyl carrier protein (AccB), biotin carboxylase (AccC) and two subunits each of ACCase subunit alpha (AccA) and ACCase subunit beta (AccD).

It is found in the cytoplasm. It catalyses the reaction N(6)-carboxybiotinyl-L-lysyl-[protein] + acetyl-CoA = N(6)-biotinyl-L-lysyl-[protein] + malonyl-CoA. It participates in lipid metabolism; malonyl-CoA biosynthesis; malonyl-CoA from acetyl-CoA: step 1/1. Component of the acetyl coenzyme A carboxylase (ACC) complex. First, biotin carboxylase catalyzes the carboxylation of biotin on its carrier protein (BCCP) and then the CO(2) group is transferred by the carboxyltransferase to acetyl-CoA to form malonyl-CoA. This is Acetyl-coenzyme A carboxylase carboxyl transferase subunit alpha from Salmonella arizonae (strain ATCC BAA-731 / CDC346-86 / RSK2980).